The sequence spans 86 residues: Maxadilan (86 aa).

The first 23 residues, 1-23 (MKQILLISLVVVLAVFAFNVAEG), serve as a signal peptide directing secretion. 2 disulfides stabilise this stretch: Cys-24–Cys-28 and Cys-37–Cys-74.

As to quaternary structure, interacts with human ADCYAP1R1. In terms of tissue distribution, salivary gland (at protein level).

The protein resides in the secreted. Potent vasodilator. Activates mammalian ADCYAP1R1, a PAC1 receptor, and induces cAMP accumulation in host cells. Causes the development of erythema following superficial injection into the rabbit or human skin. Influences adaptive immune responses mediated by host dendritic cells. Reduces surface expression of CD80 on host dendritic cells stimulated with lipopolysaccharides (LPS) and induces concomitant increase in CD86 expression on a subpopulation of these cells. Redirects cytokine secretion by LPS-activated host dendritic cells toward type 2 responses: decreases secretion of TNF-alpha/TNF, IL-12p40/IL12B and IFN-gamma/IFNG, and increases secretion of IL6 and IL10. Reduces ability of host bone marrow-derived dendritic cells to stimulate proliferation of CD4(+) T-cells. Reprograms the effect of LPS-activated host dendritic cells on cytokine secretion profiles in host T-cells: decreases secretion of TNF-alpha/TNF and IFN-gamma/IFNG, increases secretion of IL6 and IL13, and increases secretion of pro-inflammatory cytokine IL-1beta/IL1B in mixed lymphocyte reaction (MLR) cultures. Reduces LPS-induced up-regulation of CCR7 in activated host dendritic cells. Inhibits IFN-gamma/IFNG and IL-12p40/IL12B production by human peripheral blood mononuclear cells. Increases IL6 and decreases TNF-alpha/TNF production by LPS-stimulated human monocytes. In terms of biological role, (Microbial infection) Probably plays a critical role in the enhancement of Leishmania infectivity in the host attributed to sand fly saliva. The sequence is that of Maxadilan from Lutzomyia longipalpis (Sand fly).